The sequence spans 347 residues: MELRTVWWENDAVCLIDQRKLPHTMEVVRCTDLAAVAYAIRSMQVRGAPAIGCTAAYGMALVAQQSVALTPSALLTELVQAKATLDSQRPTAVNLAWATSRMLRRAEAVASEGVEAIKHALHAEAEAIFAEDLAMCHAIGEHGASLIPPRGHVLTHCNAGGLATAGYGTALAPIRTAFAQGRPVHVFVDETRPFLQGARLTAWELLQAGIPQTLITDNMAAFMMQRGQIDCVIVGADRIAANGDVANKIGTYGLAVLARYHNIPFYVAAPSSTIDLATASGADIPIEERDPAEVTHIAGVAIAPQGVRAAHPAFDVTPNELVTAIITERGIVRPPYLAALRQLESGR.

Substrate-binding positions include 46–48, Arg89, and Gln196; that span reads RGA. Asp237 acts as the Proton donor in catalysis. 247–248 is a substrate binding site; it reads NK.

Belongs to the eIF-2B alpha/beta/delta subunits family. MtnA subfamily.

It carries out the reaction 5-(methylsulfanyl)-alpha-D-ribose 1-phosphate = 5-(methylsulfanyl)-D-ribulose 1-phosphate. Its pathway is amino-acid biosynthesis; L-methionine biosynthesis via salvage pathway; L-methionine from S-methyl-5-thio-alpha-D-ribose 1-phosphate: step 1/6. In terms of biological role, catalyzes the interconversion of methylthioribose-1-phosphate (MTR-1-P) into methylthioribulose-1-phosphate (MTRu-1-P). The polypeptide is Methylthioribose-1-phosphate isomerase (Chloroflexus aurantiacus (strain ATCC 29366 / DSM 635 / J-10-fl)).